We begin with the raw amino-acid sequence, 322 residues long: Probable cell division protein WhiA (322 aa).

A DNA-binding region (H-T-H motif) is located at residues 279–312 (SLKELGELWTPPVGKSGVNHRIRKIERLAEKLRS).

This sequence belongs to the WhiA family.

Involved in cell division and chromosome segregation. The chain is Probable cell division protein WhiA from Desulforamulus reducens (strain ATCC BAA-1160 / DSM 100696 / MI-1) (Desulfotomaculum reducens).